Consider the following 408-residue polypeptide: Multifunctional CCA protein (408 aa).

G8 and R11 together coordinate ATP. 2 residues coordinate CTP: G8 and R11. Mg(2+)-binding residues include D21 and D23. 3 residues coordinate ATP: R91, R137, and R140. CTP is bound by residues R91, R137, and R140. An HD domain is found at S228–W329.

It belongs to the tRNA nucleotidyltransferase/poly(A) polymerase family. Bacterial CCA-adding enzyme type 1 subfamily. In terms of assembly, monomer. Can also form homodimers and oligomers. It depends on Mg(2+) as a cofactor. Ni(2+) serves as cofactor.

The enzyme catalyses a tRNA precursor + 2 CTP + ATP = a tRNA with a 3' CCA end + 3 diphosphate. It catalyses the reaction a tRNA with a 3' CCA end + 2 CTP + ATP = a tRNA with a 3' CCACCA end + 3 diphosphate. Its function is as follows. Catalyzes the addition and repair of the essential 3'-terminal CCA sequence in tRNAs without using a nucleic acid template. Adds these three nucleotides in the order of C, C, and A to the tRNA nucleotide-73, using CTP and ATP as substrates and producing inorganic pyrophosphate. tRNA 3'-terminal CCA addition is required both for tRNA processing and repair. Also involved in tRNA surveillance by mediating tandem CCA addition to generate a CCACCA at the 3' terminus of unstable tRNAs. While stable tRNAs receive only 3'-terminal CCA, unstable tRNAs are marked with CCACCA and rapidly degraded. This Shewanella piezotolerans (strain WP3 / JCM 13877) protein is Multifunctional CCA protein.